Here is a 184-residue protein sequence, read N- to C-terminus: Photosystem I assembly protein Ycf4 (184 aa).

Helical transmembrane passes span F22–S42 and I57–S77.

It belongs to the Ycf4 family.

The protein localises to the plastid. It is found in the chloroplast thylakoid membrane. Functionally, seems to be required for the assembly of the photosystem I complex. This is Photosystem I assembly protein Ycf4 from Chloranthus spicatus (Chulantree).